The sequence spans 363 residues: MIIDTTKVQAINSFSRSESLKEVIGLIWMLVPILTLVLAITIGVLVIVWLERQISAGIQQRIGPEYAGPLGILQAIADGTKLLFKEDILPSRGDIRLFSIGPSIAVISIILSYSVIPFSYHLVLADLGIGVFLWIAVSSIAPIGLLMSGYGSNNKYSFSGGLRAAAQSISYEIPLTLCVLSISLLSNSLSTIDIVEVQSKYGIWGWNLWRQPVGFIVFLISSLAECERLPFDLPEAEEELVAGYQTEYSGIKFGLFYVASYLNLLVSSLFVTVLYFGGWNLSIPYTSIFGLFGINQTSGVFGTTMGMFITLAKTYLFLFISVATRWTLPRMRMDQLLNLGWKFLLPISLGNLLLTTSFQLLSL.

Helical transmembrane passes span 30–50, 104–124, 127–147, 253–273, 300–320, and 343–363; these read LVPI…IVWL, IAVI…HLVL, LGIG…GLLM, FGLF…FVTV, VFGT…FLFI, and FLLP…LLSL.

This sequence belongs to the complex I subunit 1 family. As to quaternary structure, NDH is composed of at least 16 different subunits, 5 of which are encoded in the nucleus.

It is found in the plastid. It localises to the chloroplast thylakoid membrane. It carries out the reaction a plastoquinone + NADH + (n+1) H(+)(in) = a plastoquinol + NAD(+) + n H(+)(out). It catalyses the reaction a plastoquinone + NADPH + (n+1) H(+)(in) = a plastoquinol + NADP(+) + n H(+)(out). Functionally, NDH shuttles electrons from NAD(P)H:plastoquinone, via FMN and iron-sulfur (Fe-S) centers, to quinones in the photosynthetic chain and possibly in a chloroplast respiratory chain. The immediate electron acceptor for the enzyme in this species is believed to be plastoquinone. Couples the redox reaction to proton translocation, and thus conserves the redox energy in a proton gradient. The chain is NAD(P)H-quinone oxidoreductase subunit 1, chloroplastic from Piper cenocladum (Ant piper).